The sequence spans 522 residues: MSEWKESLNVPKKDTRHKTEDVTATKGTGFEDFFLKRELLMGIFEAGFENPSPIQEEAIPIALAGRDILARAKNGTGKTAAFVIPALQQVNPKVNKIQALIMVPTRELALQTSQVCKTLGKHLGIKVMVTTGGTNLRDDIMRLEDTVHVLVGTPGRVLDLAGKGVADLSESPMFIMDEADKLLSPDFTPIIEQVLHFFPEDRQILLFSATFPLTVKAFMDRNLHKPYEINLMDELTLRGITQYYAFVDEKQKLHCLNTLFSKLDINQSIIFCNSTVRVELLARKITELGYSCYYSHAKMIQSHRNRVFHEFRNGTCRNLVCSDLLTRGIDIQAVNVVINFDFPKNAETYLHRIGRSGRFGHLGIAINLINWNDRYNLYKIEQELGTEIKPIPAQIDKNLYVAESSENIPRPFPIADMPRGKESKRNEQFQPQQNQNQQQQQDGQNQHSLGPVPPQGPPQGIPGPGYGYPPPQGFPQGMPPQGMPPQGAGGYMPPTPYGYQQQGFPPQPPQGFNNGQPQQPSQ.

Residues 1–20 are disordered; sequence MSEWKESLNVPKKDTRHKTE. The Q motif motif lies at 28 to 56; that stretch reads TGFEDFFLKRELLMGIFEAGFENPSPIQE. Positions 59–229 constitute a Helicase ATP-binding domain; the sequence is IPIALAGRDI…DRNLHKPYEI (171 aa). 72 to 79 contacts ATP; the sequence is AKNGTGKT. The DEAD box motif lies at 177–180; that stretch reads DEAD. The Helicase C-terminal domain occupies 239-399; it reads GITQYYAFVD…PIPAQIDKNL (161 aa). A disordered region spans residues 408-522; sequence IPRPFPIADM…NNGQPQQPSQ (115 aa). Residues 418 to 427 are compositionally biased toward basic and acidic residues; it reads PRGKESKRNE. Residues 428-446 are compositionally biased toward low complexity; that stretch reads QFQPQQNQNQQQQQDGQNQ. Positions 451-483 are enriched in pro residues; it reads PVPPQGPPQGIPGPGYGYPPPQGFPQGMPPQGM. Low complexity predominate over residues 497-522; sequence YGYQQQGFPPQPPQGFNNGQPQQPSQ.

This sequence belongs to the DEAD box helicase family. DDX6/DHH1 subfamily.

Its subcellular location is the cytoplasm. It is found in the P-body. The catalysed reaction is ATP + H2O = ADP + phosphate + H(+). Its function is as follows. ATP-dependent RNA helicase involved in mRNA turnover, and more specifically in mRNA decapping. Is involved in G1/S DNA-damage checkpoint recovery, probably through the regulation of the translational status of a subset of mRNAs. May also have a role in translation and mRNA nuclear export. The protein is ATP-dependent RNA helicase DHH1 (DHH1) of Yarrowia lipolytica (strain CLIB 122 / E 150) (Yeast).